Consider the following 198-residue polypeptide: Nucleoside triphosphate pyrophosphatase (198 aa).

Aspartate 75 (proton acceptor) is an active-site residue.

This sequence belongs to the Maf family. A divalent metal cation is required as a cofactor.

Its subcellular location is the cytoplasm. It catalyses the reaction a ribonucleoside 5'-triphosphate + H2O = a ribonucleoside 5'-phosphate + diphosphate + H(+). The catalysed reaction is a 2'-deoxyribonucleoside 5'-triphosphate + H2O = a 2'-deoxyribonucleoside 5'-phosphate + diphosphate + H(+). In terms of biological role, nucleoside triphosphate pyrophosphatase. May have a dual role in cell division arrest and in preventing the incorporation of modified nucleotides into cellular nucleic acids. In Hyphomonas neptunium (strain ATCC 15444), this protein is Nucleoside triphosphate pyrophosphatase.